The primary structure comprises 287 residues: Nucleotide-binding protein Ajs_0902 (287 aa).

An ATP-binding site is contributed by 10–17; sequence GMSGSGKS. 59–62 is a binding site for GTP; it reads DVRS.

Belongs to the RapZ-like family.

Its function is as follows. Displays ATPase and GTPase activities. The polypeptide is Nucleotide-binding protein Ajs_0902 (Acidovorax sp. (strain JS42)).